The chain runs to 332 residues: Inositol 2-dehydrogenase 2 (332 aa).

This sequence belongs to the Gfo/Idh/MocA family. As to quaternary structure, homotetramer.

The enzyme catalyses myo-inositol + NAD(+) = scyllo-inosose + NADH + H(+). In terms of biological role, involved in the oxidation of myo-inositol (MI) to 2-keto-myo-inositol (2KMI or 2-inosose). This is Inositol 2-dehydrogenase 2 from Paenarthrobacter aurescens (strain TC1).